Consider the following 206-residue polypeptide: Ras-related protein Ral-A (206 aa).

GTP is bound by residues 24–29 (GVGKSA), 40–46 (VEDYEPT), and 127–130 (NKSD). The short motif at 43–51 (YEPTKADSY) is the Effector region element. A glycan ((Microbial infection) O-linked (Glc) threonine; by P.sordellii toxin TcsL) is linked at Thr46. Ser194 is subject to Phosphoserine; by AURKA. Residue Cys203 is modified to Cysteine methyl ester. Cys203 is lipidated: S-geranylgeranyl cysteine. Residues 204-206 (CIL) constitute a propeptide, removed in mature form.

Belongs to the small GTPase superfamily. Ras family. In terms of assembly, interacts (via effector domain) with RALBP1; during mitosis, recruits RALBP1 to the mitochondrion where it promotes DNM1L phosphorylation and mitochondrial fission. Interacts with EXOC2/Sec5 and EXOC8/Exo84; binding to EXOC2 and EXOC8 is mutually exclusive. Interacts with Clostridium exoenzyme C3. Interacts with RALGPS1. Interacts with LPAR1 and LPAR2. Interacts with GRK2 in response to LPAR1 activation. RALA and GRK2 binding to LPAR1 is mutually exclusive. Interacts with CDC42. In terms of processing, phosphorylated. Phosphorylation at Ser-194 by AURKA/Aurora kinase A, during mitosis, induces RALA localization to the mitochondrion where it regulates mitochondrial fission. Prenylation is essential for membrane localization. The geranylgeranylated form and the farnesylated mutant do not undergo alternative prenylation in response to geranylgeranyltransferase I inhibitors (GGTIs) and farnesyltransferase I inhibitors (FTIs). Post-translationally, (Microbial infection) Glucosylated at Thr-46 by P.sordellii toxin TcsL from strain 6018. Monoglucosylation completely prevents the recognition of the downstream effector, blocking the GTPases in their inactive form. Not glucosylated by TcsL from strain VPI 9048.

The protein resides in the cell membrane. Its subcellular location is the cleavage furrow. It is found in the midbody. The protein localises to the midbody ring. It localises to the mitochondrion. The catalysed reaction is GTP + H2O = GDP + phosphate + H(+). Alternates between an inactive form bound to GDP and an active form bound to GTP. Activated by a guanine nucleotide-exchange factor (GEF) and inactivated by a GTPase-activating protein (GAP). Multifunctional GTPase involved in a variety of cellular processes including gene expression, cell migration, cell proliferation, oncogenic transformation and membrane trafficking. Accomplishes its multiple functions by interacting with distinct downstream effectors. Acts as a GTP sensor for GTP-dependent exocytosis of dense core vesicles. The RALA-exocyst complex regulates integrin-dependent membrane raft exocytosis and growth signaling. Key regulator of LPAR1 signaling and competes with GRK2 for binding to LPAR1 thus affecting the signaling properties of the receptor. Required for anchorage-independent proliferation of transformed cells. During mitosis, supports the stabilization and elongation of the intracellular bridge between dividing cells. Cooperates with EXOC2 to recruit other components of the exocyst to the early midbody. During mitosis, also controls mitochondrial fission by recruiting to the mitochondrion RALBP1, which mediates the phosphorylation and activation of DNM1L by the mitotic kinase cyclin B-CDK1. In Homo sapiens (Human), this protein is Ras-related protein Ral-A (RALA).